Reading from the N-terminus, the 327-residue chain is Ribose-phosphate pyrophosphokinase (327 aa).

51–53 contacts ATP; that stretch reads DGE. Mg(2+) contacts are provided by H144 and D183. The active site involves K207. D-ribose 5-phosphate contacts are provided by residues R209, D233, and 237-241; that span reads DTGGT.

This sequence belongs to the ribose-phosphate pyrophosphokinase family. Class I subfamily. In terms of assembly, homohexamer. Requires Mg(2+) as cofactor.

The protein localises to the cytoplasm. The catalysed reaction is D-ribose 5-phosphate + ATP = 5-phospho-alpha-D-ribose 1-diphosphate + AMP + H(+). The protein operates within metabolic intermediate biosynthesis; 5-phospho-alpha-D-ribose 1-diphosphate biosynthesis; 5-phospho-alpha-D-ribose 1-diphosphate from D-ribose 5-phosphate (route I): step 1/1. In terms of biological role, involved in the biosynthesis of the central metabolite phospho-alpha-D-ribosyl-1-pyrophosphate (PRPP) via the transfer of pyrophosphoryl group from ATP to 1-hydroxyl of ribose-5-phosphate (Rib-5-P). In Prochlorococcus marinus (strain SARG / CCMP1375 / SS120), this protein is Ribose-phosphate pyrophosphokinase.